The following is a 101-amino-acid chain: Small ribosomal subunit protein bS6 (101 aa).

Belongs to the bacterial ribosomal protein bS6 family.

Binds together with bS18 to 16S ribosomal RNA. The chain is Small ribosomal subunit protein bS6 from Staphylococcus saprophyticus subsp. saprophyticus (strain ATCC 15305 / DSM 20229 / NCIMB 8711 / NCTC 7292 / S-41).